A 774-amino-acid chain; its full sequence is 5-methyltetrahydropteroyltriglutamate--homocysteine methyltransferase (774 aa).

Residues 24–27 and K120 each bind 5-methyltetrahydropteroyltri-L-glutamate; that span reads RELK. Residues 446–448 and E499 each bind L-homocysteine; that span reads IGS. Residues 446–448 and E499 each bind L-methionine; that span reads IGS. W576 lines the 5-methyltetrahydropteroyltri-L-glutamate pocket. An L-homocysteine-binding site is contributed by D614. D614 contributes to the L-methionine binding site. Residue E620 participates in 5-methyltetrahydropteroyltri-L-glutamate binding. Residues H656, C658, and E680 each contribute to the Zn(2+) site. H709 acts as the Proton donor in catalysis. C741 lines the Zn(2+) pocket.

Belongs to the vitamin-B12 independent methionine synthase family. Requires Zn(2+) as cofactor.

The enzyme catalyses 5-methyltetrahydropteroyltri-L-glutamate + L-homocysteine = tetrahydropteroyltri-L-glutamate + L-methionine. Its pathway is amino-acid biosynthesis; L-methionine biosynthesis via de novo pathway; L-methionine from L-homocysteine (MetE route): step 1/1. In terms of biological role, catalyzes the transfer of a methyl group from 5-methyltetrahydrofolate to homocysteine resulting in methionine formation. This Streptomyces griseus subsp. griseus (strain JCM 4626 / CBS 651.72 / NBRC 13350 / KCC S-0626 / ISP 5235) protein is 5-methyltetrahydropteroyltriglutamate--homocysteine methyltransferase.